The primary structure comprises 218 residues: Phosphoglycolate phosphatase (218 aa).

Residue Asp7 is the Nucleophile of the active site. Mg(2+) contacts are provided by Asp7, Asp9, and Asp167.

The protein belongs to the HAD-like hydrolase superfamily. CbbY/CbbZ/Gph/YieH family. It depends on Mg(2+) as a cofactor.

It catalyses the reaction 2-phosphoglycolate + H2O = glycolate + phosphate. It functions in the pathway organic acid metabolism; glycolate biosynthesis; glycolate from 2-phosphoglycolate: step 1/1. Specifically catalyzes the dephosphorylation of 2-phosphoglycolate. Is involved in the dissimilation of the intracellular 2-phosphoglycolate formed during the DNA repair of 3'-phosphoglycolate ends, a major class of DNA lesions induced by oxidative stress. The chain is Phosphoglycolate phosphatase from Cereibacter sphaeroides (strain ATCC 17029 / ATH 2.4.9) (Rhodobacter sphaeroides).